A 360-amino-acid chain; its full sequence is MDSSNCKVIAPLLSQRYRRMVTKDGHSTLQMDGAQRGLAYLRDAWGILMDMRWRWMMLVFSASFVVHWLVFAVLWYVLAEMNGDLELDHDAPPENHTICVKYITSFTAAFSFSLETQLTIGYGTMFPSGDCPSAIALLAIQMLLGLMLEAFITGAFVAKIARPKNRAFSIRFTDTAVVAHMDGKPNLIFQVANTRPSPLTSVRVSAVLYQERENGKLYQTSVDFHLDGISSDECPFFIFPLTYYHSITPSSPLATLLQHENPSHFELVVFLSAMQEGTGEICQRRTSYLPSEIMLHHCFASLLTRGSKGEYQIKMENFDKTVPEFPTPLVSKSPNRTDLDIHINGQSIDNFQISETGLTE.

Residues methionine 1–aspartate 50 lie on the Cytoplasmic side of the membrane. The helical transmembrane segment at methionine 51–valine 77 threads the bilayer. At leucine 78–serine 105 the chain is on the extracellular side. The segment at residues phenylalanine 106–tyrosine 122 is an intramembrane region (helical; Pore-forming). Positions threonine 119–threonine 124 match the Selectivity filter motif. Residues glycine 123–cysteine 131 are Extracellular-facing. The helical transmembrane segment at proline 132–valine 157 threads the bilayer. The Cytoplasmic portion of the chain corresponds to alanine 158–glutamate 360. The residue at position 201 (serine 201) is a Phosphoserine; by PKC. Serine 287 is modified (phosphoserine; by PKA).

It belongs to the inward rectifier-type potassium channel (TC 1.A.2.1) family. KCNJ13 subfamily. As to quaternary structure, homotetramer. Interacts with RAB28; the interaction may facilitate cone outer segments phagocytosis. In terms of processing, phosphorylation at Ser-201 by PKC strongly inhibits ionic currents, while phosphorylation at Ser-287 by PKA increases them. As to expression, predominantly expressed in small intestine. Expression is also detected in stomach, kidney, and all central nervous system regions tested with the exception of spinal cord.

The protein resides in the membrane. It is found in the cell membrane. The enzyme catalyses K(+)(in) = K(+)(out). Inhibited by Ba(2+) and Cs(+), although sensitivity to those inhibitors is much lower than in other Kir channels. Its function is as follows. Inward rectifier potassium channels are characterized by a greater tendency to allow potassium to flow into the cell rather than out of it. Their voltage dependence is regulated by the concentration of extracellular potassium; as external potassium is raised, the voltage range of the channel opening shifts to more positive voltages. The inward rectification is mainly due to the blockage of outward current by internal magnesium. KCNJ13 has a very low single channel conductance, low sensitivity to block by external barium and cesium, and no dependence of its inward rectification properties on the internal blocking particle magnesium. This chain is Inward rectifier potassium channel 13 (KCNJ13), found in Homo sapiens (Human).